Reading from the N-terminus, the 878-residue chain is MSRVIVKGLPIYLKEDRLRDLIEKRLTQKHQSTDVQSYLSDVKLMKNRDGESRRFAFIGFRDEEDAFDCVNYFNGTFVDTSKIEVSMAKSFADPRVPQPMREKRREALKRLREREELLLADKKDSQKKQKSDSNNDGGKKHDIDAEIAKNKQLQEFINTMKPSSQVTSWETVQSSKTQGEDEEAADDEVGEMSSNPLLSQALALKGNSRDADEDTDMFKLPGNESDDEYVSLNGGSNNANTDEPEPQMMSLDTFDTAGPTSTDDMAKDEAVSDLDWLKNRRVRIKDGADTPVSKQQQQPDTEQQQPEETEVETSQESEEEKSLKKIRETGRLFLRNILYTATEDDFRKLFSPYGELEEVHIAVDTRTGQSKGFAYVLFKNADNAATAFVELDKQIFQGRLLHILPADAKKSHKLDEFDLKNLPLKKQRELKRKANSAQQTFSWNSLYMNQDAVLSSVADKLGMKKSELIDAENSSSAVKQALAEASVIGDVRKFFETRGVDLTKFAQLKNSERDDRVILVKNFPYGTTREEIAELFLPFGKLQRLLLPPSGTIAILQFRDVPAARAAFSKISYKRFKDGIIYLEKGPSDCFTRDAQGDELVESETDIQKATAKEAKISGADLLEAQSLPAADKDDHDDDDDDDDVQAGPTVSIFIKNLNFSTTSQQLTEKFKPFNGFVVAQVKTKPDPKQPGKTLSMGFGFAEFKTKEQANAVISAMEGTILDGHKLQLKLSHRQGTSTTNASSKKKKKNQGKIIVKNLPFEATRKDVFELFSSFGQLKSVRVPKKFDKSARGFAFVEFLLPKEAENAMDQLQGVHLLGRRLVMEFVEQDPEDVEQQIEKMTRKVKKQVNTTKIANMRNSGKRKIDLDEDDENDGLQG.

The 89-residue stretch at serine 2 to serine 90 folds into the RRM 1 domain. Disordered stretches follow at residues leucine 118 to isoleucine 143, threonine 159 to glutamate 269, and glycine 287 to leucine 323. Residues threonine 159 to threonine 177 show a composition bias toward polar residues. A compositionally biased stretch (acidic residues) spans glutamate 180 to glycine 190. Low complexity predominate over residues glutamine 295 to glutamine 304. The segment covering glutamine 305 to glutamate 319 has biased composition (acidic residues). RRM domains lie at glycine 330–alanine 408, arginine 516–serine 588, valine 651–arginine 734, and glycine 752–glutamine 829. Residues serine 732–glutamine 751 form a disordered region. A disordered region spans residues threonine 852–glycine 878. A compositionally biased stretch (acidic residues) spans leucine 867–glycine 878.

The protein belongs to the RRM MRD1 family.

It localises to the nucleus. Involved in pre-rRNA processing. The protein is Multiple RNA-binding domain-containing protein 1 (MRD1) of Kluyveromyces lactis (strain ATCC 8585 / CBS 2359 / DSM 70799 / NBRC 1267 / NRRL Y-1140 / WM37) (Yeast).